Here is a 171-residue protein sequence, read N- to C-terminus: 3-hydroxydecanoyl-[acyl-carrier-protein] dehydratase (171 aa).

The active site involves histidine 70.

Belongs to the thioester dehydratase family. FabA subfamily. As to quaternary structure, homodimer.

The protein localises to the cytoplasm. It catalyses the reaction a (3R)-hydroxyacyl-[ACP] = a (2E)-enoyl-[ACP] + H2O. It carries out the reaction (3R)-hydroxydecanoyl-[ACP] = (2E)-decenoyl-[ACP] + H2O. The catalysed reaction is (2E)-decenoyl-[ACP] = (3Z)-decenoyl-[ACP]. It participates in lipid metabolism; fatty acid biosynthesis. Necessary for the introduction of cis unsaturation into fatty acids. Catalyzes the dehydration of (3R)-3-hydroxydecanoyl-ACP to E-(2)-decenoyl-ACP and then its isomerization to Z-(3)-decenoyl-ACP. Can catalyze the dehydratase reaction for beta-hydroxyacyl-ACPs with saturated chain lengths up to 16:0, being most active on intermediate chain length. This chain is 3-hydroxydecanoyl-[acyl-carrier-protein] dehydratase, found in Pseudomonas syringae pv. tomato (strain ATCC BAA-871 / DC3000).